We begin with the raw amino-acid sequence, 120 residues long: UPF0102 protein CBU_1742 (120 aa).

The protein belongs to the UPF0102 family.

The polypeptide is UPF0102 protein CBU_1742 (Coxiella burnetii (strain RSA 493 / Nine Mile phase I)).